The following is a 246-amino-acid chain: Agamous-like MADS-box protein AGL5 (246 aa).

Positions 18 to 72 (RGKIEIKRIENTTNRQVTFCKRRNGLLKKAYELSVLCDAEVALVIFSTRGRLYEY) constitute an MADS-box domain. Residues 102–192 (TQYYQQEASK…RSKITERTGL (91 aa)) form the K-box domain.

In terms of assembly, interacts with AGL15 and AGL16.

It is found in the nucleus. In terms of biological role, probable transcription factor. Interacts genetically with TT16/AGL32 in a partially antagonistic manner during flower development. Is essential for the coordination of cell divisions in ovule, seed coat development and endosperm formation. The protein is Agamous-like MADS-box protein AGL5 (AGL5) of Arabidopsis thaliana (Mouse-ear cress).